Here is a 133-residue protein sequence, read N- to C-terminus: Interleukin-4 (133 aa).

An N-terminal signal peptide occupies residues 1-24 (MGLTSQLIPTLVCLLACTSNFVHG). Cystine bridges form between cysteine 27–cysteine 133, cysteine 48–cysteine 85, and cysteine 70–cysteine 105. A glycan (N-linked (GlcNAc...) asparagine) is linked at asparagine 62.

This sequence belongs to the IL-4/IL-13 family.

The protein localises to the secreted. Functionally, participates in at least several B-cell activation processes as well as of other cell types. It is a costimulator of DNA-synthesis. It induces the expression of class II MHC molecules on resting B-cells. It enhances both secretion and cell surface expression of IgE and IgG1. It also regulates the expression of the low affinity Fc receptor for IgE (CD23) on both lymphocytes and monocytes. Positively regulates IL31RA expression in macrophages. Stimulates autophagy in dendritic cells by interfering with mTORC1 signaling and through the induction of RUFY4. The polypeptide is Interleukin-4 (IL4) (Sus scrofa (Pig)).